Here is a 90-residue protein sequence, read N- to C-terminus: Small ribosomal subunit protein bS16 (90 aa).

The protein belongs to the bacterial ribosomal protein bS16 family.

The sequence is that of Small ribosomal subunit protein bS16 from Shouchella clausii (strain KSM-K16) (Alkalihalobacillus clausii).